The sequence spans 230 residues: Uracil-DNA glycosylase (230 aa).

The Proton acceptor role is filled by Asp70.

It belongs to the uracil-DNA glycosylase (UDG) superfamily. UNG family.

It localises to the cytoplasm. It catalyses the reaction Hydrolyzes single-stranded DNA or mismatched double-stranded DNA and polynucleotides, releasing free uracil.. Excises uracil residues from the DNA which can arise as a result of misincorporation of dUMP residues by DNA polymerase or due to deamination of cytosine. The chain is Uracil-DNA glycosylase from Pseudomonas fluorescens (strain SBW25).